The chain runs to 564 residues: Septation ring formation regulator EzrA (564 aa).

Residues 1–2 (MV) lie on the Extracellular side of the membrane. A helical transmembrane segment spans residues 3–21 (FVISVILAIIVILTIGLIL). At 22-564 (RKRIYDKVDH…IEENQLTLNR (543 aa)) the chain is on the cytoplasmic side. Coiled coils occupy residues 101-140 (ANNILTEGDQKLQNIEVKIEEILEELDELLSSEKTSREEV), 168-215 (FDKK…MEQF), 251-436 (GFDK…KKSN), and 468-537 (DIAK…ELSL).

It belongs to the EzrA family.

The protein resides in the cell membrane. Functionally, negative regulator of FtsZ ring formation; modulates the frequency and position of FtsZ ring formation. Inhibits FtsZ ring formation at polar sites. Interacts either with FtsZ or with one of its binding partners to promote depolymerization. This is Septation ring formation regulator EzrA from Oceanobacillus iheyensis (strain DSM 14371 / CIP 107618 / JCM 11309 / KCTC 3954 / HTE831).